A 208-amino-acid chain; its full sequence is Small ribosomal subunit protein uS4 (208 aa).

Positions 98–158 constitute an S4 RNA-binding domain; it reads CRLDTVSYRM…EKAKNHLRIK (61 aa).

The protein belongs to the universal ribosomal protein uS4 family. Part of the 30S ribosomal subunit. Contacts protein S5. The interaction surface between S4 and S5 is involved in control of translational fidelity.

Its function is as follows. One of the primary rRNA binding proteins, it binds directly to 16S rRNA where it nucleates assembly of the body of the 30S subunit. In terms of biological role, with S5 and S12 plays an important role in translational accuracy. The chain is Small ribosomal subunit protein uS4 from Nitrosospira multiformis (strain ATCC 25196 / NCIMB 11849 / C 71).